The following is a 367-amino-acid chain: Ribosome-binding ATPase YchF (367 aa).

The OBG-type G domain occupies 2 to 258 (LSAGIVGLPN…LKLEQRQYFL (257 aa)). 11 to 16 (NVGKST) provides a ligand contact to ATP. Mg(2+)-binding residues include S15 and T35. The region spanning 281 to 364 (NLWSFFTFGK…KDGDVCNFKF (84 aa)) is the TGS domain.

The protein belongs to the TRAFAC class OBG-HflX-like GTPase superfamily. OBG GTPase family. YchF/OLA1 subfamily. Mg(2+) serves as cofactor.

Functionally, ATPase that binds to both the 70S ribosome and the 50S ribosomal subunit in a nucleotide-independent manner. The chain is Ribosome-binding ATPase YchF from Mycoplasma genitalium (strain ATCC 33530 / DSM 19775 / NCTC 10195 / G37) (Mycoplasmoides genitalium).